Reading from the N-terminus, the 567-residue chain is Proline--tRNA ligase (567 aa).

It belongs to the class-II aminoacyl-tRNA synthetase family. ProS type 1 subfamily. As to quaternary structure, homodimer.

The protein localises to the cytoplasm. The catalysed reaction is tRNA(Pro) + L-proline + ATP = L-prolyl-tRNA(Pro) + AMP + diphosphate. Its function is as follows. Catalyzes the attachment of proline to tRNA(Pro) in a two-step reaction: proline is first activated by ATP to form Pro-AMP and then transferred to the acceptor end of tRNA(Pro). As ProRS can inadvertently accommodate and process non-cognate amino acids such as alanine and cysteine, to avoid such errors it has two additional distinct editing activities against alanine. One activity is designated as 'pretransfer' editing and involves the tRNA(Pro)-independent hydrolysis of activated Ala-AMP. The other activity is designated 'posttransfer' editing and involves deacylation of mischarged Ala-tRNA(Pro). The misacylated Cys-tRNA(Pro) is not edited by ProRS. The polypeptide is Proline--tRNA ligase (Staphylococcus aureus (strain USA300)).